A 303-amino-acid polypeptide reads, in one-letter code: Recombination-associated protein RdgC (303 aa).

It belongs to the RdgC family.

It is found in the cytoplasm. It localises to the nucleoid. Its function is as follows. May be involved in recombination. This Shewanella loihica (strain ATCC BAA-1088 / PV-4) protein is Recombination-associated protein RdgC.